Here is a 728-residue protein sequence, read N- to C-terminus: Catalase-peroxidase (728 aa).

A cross-link (tryptophyl-tyrosyl-methioninium (Trp-Tyr) (with M-244)) is located at residues 91 to 218; sequence WHSAGTYRIA…LAAVQMGLIY (128 aa). His-92 serves as the catalytic Proton acceptor. A cross-link (tryptophyl-tyrosyl-methioninium (Tyr-Met) (with W-91)) is located at residues 218 to 244; that stretch reads YVNPEGPDGNPDPVAAARDIRETFARM. His-259 lines the heme b pocket.

This sequence belongs to the peroxidase family. Peroxidase/catalase subfamily. As to quaternary structure, homodimer or homotetramer. Heme b serves as cofactor. Formation of the three residue Trp-Tyr-Met cross-link is important for the catalase, but not the peroxidase activity of the enzyme.

The catalysed reaction is H2O2 + AH2 = A + 2 H2O. It catalyses the reaction 2 H2O2 = O2 + 2 H2O. In terms of biological role, bifunctional enzyme with both catalase and broad-spectrum peroxidase activity. The chain is Catalase-peroxidase from Burkholderia multivorans (strain ATCC 17616 / 249).